The chain runs to 108 residues: Urease subunit beta (108 aa).

It belongs to the urease beta subunit family. Heterotrimer of UreA (gamma), UreB (beta) and UreC (alpha) subunits. Three heterotrimers associate to form the active enzyme.

Its subcellular location is the cytoplasm. It catalyses the reaction urea + 2 H2O + H(+) = hydrogencarbonate + 2 NH4(+). It participates in nitrogen metabolism; urea degradation; CO(2) and NH(3) from urea (urease route): step 1/1. This chain is Urease subunit beta, found in Nocardia farcinica (strain IFM 10152).